We begin with the raw amino-acid sequence, 196 residues long: dTTP/UTP pyrophosphatase (196 aa).

The active-site Proton acceptor is D72.

This sequence belongs to the Maf family. YhdE subfamily. A divalent metal cation is required as a cofactor.

Its subcellular location is the cytoplasm. The catalysed reaction is dTTP + H2O = dTMP + diphosphate + H(+). The enzyme catalyses UTP + H2O = UMP + diphosphate + H(+). Its function is as follows. Nucleoside triphosphate pyrophosphatase that hydrolyzes dTTP and UTP. May have a dual role in cell division arrest and in preventing the incorporation of modified nucleotides into cellular nucleic acids. This chain is dTTP/UTP pyrophosphatase, found in Chlamydia trachomatis serovar L2 (strain ATCC VR-902B / DSM 19102 / 434/Bu).